The following is a 1015-amino-acid chain: Tolloid-like protein 2 (1015 aa).

The first 25 residues, 1–25 (MPRATALGALVSLLLLLPLPRGAGG), serve as a signal peptide directing secretion. Disordered stretches follow at residues 24 to 49 (GGLG…EQQL) and 88 to 130 (VGAT…TTLL). The propeptide occupies 26–149 (LGERPDATAD…AKTFSPRVRR (124 aa)). The segment covering 103–113 (SESSPDTTAMD) has biased composition (polar residues). Basic and acidic residues predominate over residues 115–125 (GTKEAGKDGRE). Residues 149–349 (RATTSRTERI…AQARKLYKCP (201 aa)) enclose the Peptidase M12A domain. Asn171 carries N-linked (GlcNAc...) asparagine glycosylation. Disulfide bonds link Cys192-Cys348, Cys212-Cys234, Cys214-Cys215, and Cys351-Cys377. Residue His242 participates in Zn(2+) binding. The active site involves Glu243. Residues His246 and His252 each contribute to the Zn(2+) site. CUB domains follow at residues 351 to 463 (CGET…YEAT) and 464 to 576 (CGGD…FFKE). Residues Asn361 and Asn392 are each glycosylated (N-linked (GlcNAc...) asparagine). 12 cysteine pairs are disulfide-bonded: Cys404–Cys426, Cys464–Cys490, Cys517–Cys539, Cys580–Cys592, Cys588–Cys601, Cys603–Cys616, Cys620–Cys646, Cys673–Cys695, Cys736–Cys747, Cys743–Cys756, Cys758–Cys771, and Cys776–Cys802. Positions 576-617 (EVDECSWPDHGGCEHRCVNTLGSYKCACDPGYELAADKKMCE) constitute an EGF-like 1; calcium-binding domain. The CUB 3 domain occupies 620-732 (CGGFITKLNG…RGFRAHFFSD (113 aa)). The N-linked (GlcNAc...) asparagine glycan is linked to Asn628. The EGF-like 2; calcium-binding domain maps to 732–772 (DKDECAKDNGGCQHECVNTFGSYLCRCRNGYWLHENGHDCK). CUB domains are found at residues 776-888 (CAHK…HSTE) and 889-1005 (CGGR…YTST). Asn805 carries N-linked (GlcNAc...) asparagine glycosylation. 3 disulfide bridges follow: Cys829/Cys851, Cys889/Cys919, and Cys946/Cys968. Omega-N-methylarginine occurs at positions 963 and 966.

The cofactor is Zn(2+).

Its subcellular location is the secreted. In terms of biological role, protease which specifically processes pro-lysyl oxidase. Required for the embryonic development. Predominant protease, which in the development, influences dorsal-ventral patterning and skeletogenesis. The polypeptide is Tolloid-like protein 2 (TLL2) (Homo sapiens (Human)).